The sequence spans 337 residues: Ribosomal RNA small subunit methyltransferase H (337 aa).

Residues 33 to 35 (AGH), aspartate 53, aspartate 101, and glutamine 108 contribute to the S-adenosyl-L-methionine site.

The protein belongs to the methyltransferase superfamily. RsmH family.

It localises to the cytoplasm. The catalysed reaction is cytidine(1402) in 16S rRNA + S-adenosyl-L-methionine = N(4)-methylcytidine(1402) in 16S rRNA + S-adenosyl-L-homocysteine + H(+). Specifically methylates the N4 position of cytidine in position 1402 (C1402) of 16S rRNA. The chain is Ribosomal RNA small subunit methyltransferase H from Herpetosiphon aurantiacus (strain ATCC 23779 / DSM 785 / 114-95).